The following is a 166-amino-acid chain: MVYIDPKHLELEDRVVAINRVTKVVKGGRRLRFAALVVVGDKNGHVGFGTGKAQEVPEAIRKAIEDAKKNLVEVPMVGSTIPHEVIGVFGGGRILMKPAVEGSGVAAGGPVRAVLELAGVADITSKSLGSNTPINVVRATVEGLKQLKRAEEVAALRGKSVEEIIG.

Positions 11–74 constitute an S5 DRBM domain; sequence LEDRVVAINR…EDAKKNLVEV (64 aa).

It belongs to the universal ribosomal protein uS5 family. Part of the 30S ribosomal subunit. Contacts proteins S4 and S8.

In terms of biological role, with S4 and S12 plays an important role in translational accuracy. Its function is as follows. Located at the back of the 30S subunit body where it stabilizes the conformation of the head with respect to the body. In Enterococcus faecalis (strain ATCC 700802 / V583), this protein is Small ribosomal subunit protein uS5.